The chain runs to 302 residues: Acetaldehyde dehydrogenase (302 aa).

Catalysis depends on cysteine 131, which acts as the Acyl-thioester intermediate. NAD(+) contacts are provided by residues 162-170 (SAGPGTRKN) and asparagine 273.

Belongs to the acetaldehyde dehydrogenase family.

The enzyme catalyses acetaldehyde + NAD(+) + CoA = acetyl-CoA + NADH + H(+). This is Acetaldehyde dehydrogenase from Acidovorax sp. (strain JS42).